The chain runs to 426 residues: Inhibin beta A chain (426 aa).

The first 20 residues, 1–20 (MPLLWLRGFLLASCWIIVRS), serve as a signal peptide directing secretion. Residues 21–310 (SPTPGSEGHS…EDHPHRRRRR (290 aa)) constitute a propeptide that is removed on maturation. A glycan (N-linked (GlcNAc...) asparagine) is linked at N165. The interval 259–288 (KKKKKEEEGEGKKKGGGEGGAGADEEKEQS) is disordered. Residues 263–274 (KEEEGEGKKKGG) show a composition bias toward basic and acidic residues. Cystine bridges form between C314/C322, C321/C391, C350/C423, and C354/C425.

Belongs to the TGF-beta family. As to quaternary structure, dimeric, linked by one or more disulfide bonds. Inhibin A is a dimer of alpha/INHA and beta-A/INHBA. Activin A is a homodimer of beta-A/INHBA. Activin AB is a dimer of beta-A/INHBA and beta-B/INHBB. Interacts with FST and FSTL3; these interactions prevent activin A interaction to its type II receptor. Activin A interacts with ACVR2A. Activin A interacts with BMPR2. Inhibin A interacts with ACVR1; this interaction creates a non-signaling complex (NSC) that inhibits ACVR1-mediated BMP signaling. Inhibin A interacts with ACVR2A.

It localises to the secreted. Inhibins/activins are involved in regulating a number of diverse functions such as hypothalamic and pituitary hormone secretion, gonadal hormone secretion, germ cell development and maturation, erythroid differentiation, insulin secretion, nerve cell survival, embryonic axial development or bone growth, depending on their subunit composition. Its function is as follows. Activin A is a homodimer of INHBA that plays a role in several essential biological processes including embryonic development, stem cell maintenance and differentiation, haematopoiesis, cell proliferation and tissue fibrosis. Signals through type I (such as ACVR1B or ACVR1C) and type II receptors (such as ACVR2A, ACVR2B or BMPR2) which, upon ligand binding, phosphorylate SMAD2 and SMAD3 intracellular signaling mediators that form a complex with SMAD4, translocate to the nucleus and modulate gene expression. Can also activate alternative non-canonical intracellular signaling pathways including the p38 MAPK, extracellular signal-regulated kinases 1/2 (ERK1/2) and c-Jun N-terminal kinases (JNKs) to modulate cell migration and differentiation. Alternatively, promotes osteoblastic differentiation via ACVRL1-SMAD1/5/9 pathway. In addition, can engage the type I receptor ACVR1 to form an ACVR1-activin A-type II receptor non-signaling complex (NSC) that renders receptors unavailable for engagement with BMPs, hence resulting in an apparent inhibition of ACVR1-mediated BMP signaling. In terms of biological role, inhibin A is a dimer of alpha/INHA and beta-A/INHBA that functions as a feedback regulator in the hypothalamic-pituitary-gonadal (HPG) axis. Inhibits the secretion of FSH from the anterior pituitary gland by acting on pituitary gonadotrope cells. Antagonizes activin A by binding to the proteoglycan, betaglycan, and forming a stable complex with and, thereby, sequestering type II activin receptors while excluding type I receptor. The protein is Inhibin beta A chain (INHBA) of Homo sapiens (Human).